The primary structure comprises 189 residues: Copper transport protein CTR2 (189 aa).

The Cytoplasmic segment spans residues 1–81 (MDDKKTWSTV…VVFEWWHIKT (81 aa)). The helical transmembrane segment at 82 to 102 (LPGLILSCLAIFGLAYLYEYL) threads the bilayer. Residues 103-142 (KYCVHKRQLSQRVLLPNRSLTKINQADKVSNSILYGLQVG) lie on the Vacuolar side of the membrane. The chain crosses the membrane as a helical span at residues 143 to 163 (FSFMLMLVFMTYNGWLMLAVV). Over 164 to 189 (CGAIWGNYSWCTSYSPEIDDSSLACH) the chain is Cytoplasmic.

It belongs to the copper transporter (Ctr) (TC 1.A.56) family. SLC31A subfamily. In terms of assembly, homomultimer.

Its subcellular location is the vacuole membrane. Provides bioavailable copper via mobilization of vacuolar copper stores and export to the cytoplasm. The polypeptide is Copper transport protein CTR2 (CTR2) (Saccharomyces cerevisiae (strain ATCC 204508 / S288c) (Baker's yeast)).